Reading from the N-terminus, the 87-residue chain is LYR motif-containing protein 2 (87 aa).

The transit peptide at 1–19 (MGSRLPPAALTLKQFLVRQ) directs the protein to the mitochondrion.

This sequence belongs to the complex I LYR family.

It is found in the mitochondrion. Functionally, involved in efficient integration of the N-module into mitochondrial respiratory chain complex I. The chain is LYR motif-containing protein 2 (lyrm2) from Xenopus laevis (African clawed frog).